Consider the following 294-residue polypeptide: 4-diphosphocytidyl-2-C-methyl-D-erythritol kinase (294 aa).

Lysine 16 is a catalytic residue. ATP is bound at residue 99 to 109 (PMGAGLGGGSS). Aspartate 141 is a catalytic residue.

This sequence belongs to the GHMP kinase family. IspE subfamily.

The catalysed reaction is 4-CDP-2-C-methyl-D-erythritol + ATP = 4-CDP-2-C-methyl-D-erythritol 2-phosphate + ADP + H(+). It functions in the pathway isoprenoid biosynthesis; isopentenyl diphosphate biosynthesis via DXP pathway; isopentenyl diphosphate from 1-deoxy-D-xylulose 5-phosphate: step 3/6. In terms of biological role, catalyzes the phosphorylation of the position 2 hydroxy group of 4-diphosphocytidyl-2C-methyl-D-erythritol. The sequence is that of 4-diphosphocytidyl-2-C-methyl-D-erythritol kinase from Polynucleobacter asymbioticus (strain DSM 18221 / CIP 109841 / QLW-P1DMWA-1) (Polynucleobacter necessarius subsp. asymbioticus).